A 123-amino-acid chain; its full sequence is MSWIEPIISHFCQDLGVPTSSPLSPLIQLEMAQSGTLQLEQHGATLTLWLARSLAWHRCEDAMVKALTLTAAQKSGTLPLRAGWLGESQLVLFVSLDERSLTLPLLHQAFEQLLRLQQEVLAP.

As to quaternary structure, interacts with YscB to form a complex which specifically binds to YopN.

It is found in the cytoplasm. It localises to the cell inner membrane. Functions as a specific chaperone for YopN. It could facilitate the secretion and the subsequent translocation of YopN. The protein is Chaperone protein SycN (sycN) of Yersinia enterocolitica serotype O:8 / biotype 1B (strain NCTC 13174 / 8081).